An 801-amino-acid chain; its full sequence is Probable inorganic carbon transporter subunit DabA (801 aa).

Residues Cys298, Asp300, His481, and Cys496 each contribute to the Zn(2+) site. The tract at residues 575–596 (RENAAAERAESMGSDASSGVSE) is disordered.

The protein belongs to the inorganic carbon transporter (TC 9.A.2) DabA family. Forms a complex with DabB. The cofactor is Zn(2+).

It localises to the cell membrane. Functionally, part of an energy-coupled inorganic carbon pump. This chain is Probable inorganic carbon transporter subunit DabA, found in Haloarcula marismortui (strain ATCC 43049 / DSM 3752 / JCM 8966 / VKM B-1809) (Halobacterium marismortui).